The chain runs to 95 residues: Aspartyl/glutamyl-tRNA(Asn/Gln) amidotransferase subunit C (95 aa).

This sequence belongs to the GatC family. Heterotrimer of A, B and C subunits.

The enzyme catalyses L-glutamyl-tRNA(Gln) + L-glutamine + ATP + H2O = L-glutaminyl-tRNA(Gln) + L-glutamate + ADP + phosphate + H(+). It catalyses the reaction L-aspartyl-tRNA(Asn) + L-glutamine + ATP + H2O = L-asparaginyl-tRNA(Asn) + L-glutamate + ADP + phosphate + 2 H(+). Its function is as follows. Allows the formation of correctly charged Asn-tRNA(Asn) or Gln-tRNA(Gln) through the transamidation of misacylated Asp-tRNA(Asn) or Glu-tRNA(Gln) in organisms which lack either or both of asparaginyl-tRNA or glutaminyl-tRNA synthetases. The reaction takes place in the presence of glutamine and ATP through an activated phospho-Asp-tRNA(Asn) or phospho-Glu-tRNA(Gln). The sequence is that of Aspartyl/glutamyl-tRNA(Asn/Gln) amidotransferase subunit C from Rhodopseudomonas palustris (strain BisB18).